Consider the following 463-residue polypeptide: uncharacterized protein (463 aa).

Transmembrane regions (helical) follow at residues 17–37, 40–60, 97–117, 122–142, 153–173, 201–221, 244–264, 278–298, 335–355, 357–377, 401–421, and 429–449; these read ISLM…SASA, LAGP…FFIM, WFLW…YMGF, VPNW…NFLA, FALI…LMII, GVLL…MIGV, ILIF…WQEI, VGIP…ALSS, AVLA…VVPA, VFTW…AIIL, LFPF…ILMA, and AVII…GKGF.

Belongs to the amino acid-polyamine-organocation (APC) superfamily.

Its subcellular location is the cell membrane. This is an uncharacterized protein from Bacillus subtilis (strain 168).